The sequence spans 617 residues: AUGMIN subunit 3 (617 aa).

Coiled coils occupy residues 107–140 (DATL…SSAL), 314–334 (LHSL…LYQK), and 481–504 (AIIQ…ENSL).

Belongs to the HAUS3 family. Part of the augmin complex composed of 8 subunits. The complex acts on microtubules and interacts with gamma-tubulin in spindles and the phragmoplast. Interacts with AUG1.

The protein localises to the cytoplasm. The protein resides in the cytoskeleton. It localises to the spindle. It is found in the phragmoplast. In terms of biological role, involved in microtubules reorganization during spindle and phragmoplast development. Required for gamma-tubulin localization during mitosis. The sequence is that of AUGMIN subunit 3 from Arabidopsis thaliana (Mouse-ear cress).